Here is a 550-residue protein sequence, read N- to C-terminus: Glucose-6-phosphate isomerase (550 aa).

The active-site Proton donor is Glu355. Active-site residues include His386 and Lys512.

Belongs to the GPI family.

The protein resides in the cytoplasm. The catalysed reaction is alpha-D-glucose 6-phosphate = beta-D-fructose 6-phosphate. Its pathway is carbohydrate biosynthesis; gluconeogenesis. It functions in the pathway carbohydrate degradation; glycolysis; D-glyceraldehyde 3-phosphate and glycerone phosphate from D-glucose: step 2/4. Catalyzes the reversible isomerization of glucose-6-phosphate to fructose-6-phosphate. The sequence is that of Glucose-6-phosphate isomerase from Rhodococcus opacus (strain B4).